The sequence spans 137 residues: MSARTKARKRALDVLYVADIRGESIPATLAVEQQRAAAEPDRQASWQYAREIAEGFVAHQDEIDELIETYSVNWTLARMPAVDRAILRIGIWEILFNADVPHGVAISESVDLASSLSTDESASFVNGMLARIAATQA.

The protein belongs to the NusB family.

In terms of biological role, involved in transcription antitermination. Required for transcription of ribosomal RNA (rRNA) genes. Binds specifically to the boxA antiterminator sequence of the ribosomal RNA (rrn) operons. The chain is Transcription antitermination protein NusB from Clavibacter michiganensis subsp. michiganensis (strain NCPPB 382).